A 756-amino-acid polypeptide reads, in one-letter code: U3 small nucleolar RNA-associated protein 25 homolog (756 aa).

The disordered stretch occupies residues 1 to 159 (MGKRGSRSQS…SQTSPEEFTD (159 aa)). Promotes p53/TP53 degradation stretches follow at residues 1–185 (MGKR…SLKA) and 573–635 (VQLP…KKEE). At Ser-10 the chain carries Phosphoserine. Positions 25–43 (RDFGEEHPFYDRVSRKEAK) are enriched in basic and acidic residues. Residues Ser-50, Ser-52, Ser-58, Ser-60, Ser-62, and Ser-64 each carry the phosphoserine modification. 2 stretches are compositionally biased toward acidic residues: residues 54–64 (DSSDSESDSES) and 84–121 (EEEE…EEMA). The represses p53/TP53 degradation stretch occupies residues 636 to 697 (LNFTHICEYT…YELPTYPHFY (62 aa)).

Belongs to the UTP25 family. Interacts with CAPN3; the interaction is required for CAPN3 translocation to the nucleolus. Phosphorylated. Phosphorylation is required to promote p53/TP53 degradation in the nucleolus which promotes cell cycle progression and liver development. Expressed in colon.

The protein localises to the nucleus. It localises to the nucleolus. Component of the ribosomal small subunit processome for the biogenesis of ribosomes, functions in pre-ribosomal RNA (pre-rRNA) processing. Essential for embryonic development in part through the regulation of p53 pathway. Controls the expansion growth of digestive organs and liver. Also involved in the sympathetic neuronal development. Mediates, with CAPN3, the proteasome-independent degradation of p53/TP53. The chain is U3 small nucleolar RNA-associated protein 25 homolog from Homo sapiens (Human).